The following is a 160-amino-acid chain: UPF0225 protein PP_1119 (160 aa).

It belongs to the UPF0225 family.

This is UPF0225 protein PP_1119 from Pseudomonas putida (strain ATCC 47054 / DSM 6125 / CFBP 8728 / NCIMB 11950 / KT2440).